The sequence spans 1193 residues: MTDQNRKELLHKTGELYKQFIENQDEQRAAKLAAVMKKAADEEVYIAFTGHYSAGKSSLLNCLLMENILPTSPIPTSANLVVIRNGEKRVRLHTTDGACAELEGTYQKDKVQQYCKDGEQIESVEIFDRYTEIDSGVAYIDTPGIDSTDDAHFLSAASILHQADALFYVVHYNHVHAEENVKFLRSIKESIPNVYFIVNQIDRHDETETKFGDYQAQVEEMLCNEGISREALYFTSVTEPDHPFNQMGALREELSRIEQQSKSNMQALTEQKVRNLLKEHTEMLKKDETGAPSFAEQLNIHTGLVQSLRDQLDEAEKQMTEAEKRMQEEINRILKNANLTPFEMRELAAAFLESQEPSFKTGFFFSKAKTAQERDKRRNAFFSDVAKRTEAEADWHMIDTLHKLAKVFDVYTAESEKLIQAYRTPLDISIIEHAVKHGAAFSSEYVLQYTKDLAELIRKEAKREAADIIKVLSAMVKERVSKDVQTINDRLVQESEKLVFLQEQARLENNAREKTDRLWAIWEEESACPMHIDTEWFKSKKTRVAAPEQKQGRSQLTAQPMPKSEIKMEQEMPLQDQIKRFYTLSDILGECSMLLKQTSAFRERVKRLEERKFTLALFGGFSSGKSSFANALVGERVLPSSPTPTTATINKITKPINGNLNKTANVVFKTEDDLTAEILQLTGIPKEPAGRSFTEKWEKAVKKNRLQEEHVKLISNFLLAYEKYQQYIQEQKKLTIPLSELKPYVAEETTACAVKEVTVYYTCPLTEKGITIVDTPGASSMNKRHTELAFQYIKDADAFFYMTYYQHSFSKGDRSFLRKLGLVKESLSMDKMFFIINAADLAKDKTELETVTDYVSAELVKEGVYEPQLFTVSSKEELVGKPESFYNQFSKVRKHLDRFIEVDVKKASAAQLSSEADKLCETVFQLHQSQHQSREEKEAQKQCLMLSFERTAADIEKRRNSKTIIEKVKKDTREQLYHIAQRLSYFANDLLKSAFHPGLQNGDWKKNVSKAMTTALHEYLFEYIQEIKTLDVRMSGFIERHINEEWLDHFQKTLNEDGYFSVYAGDQHSNGIQLKEVEPEIEERAFEQELKEIKSPKQFFEQKGKATFIEAVRMKLTKITEAWIKNEEESLISHYTAHLRRLQEDMGEKAIAQITDQKETYLRGYAEGEHAKEIEMAYQACISWKNSDNTIKM.

Residues 1-609 (MTDQNRKELL…AFRERVKRLE (609 aa)) form a D1, associates with and fuses membranes, tethers lipsomes region. Residues 50-57 (GHYSAGKS) are G1 motif D1. The tract at residues 76 to 78 (TSA) is G2 motif D1. Positions 141–144 (DTPG) are G3 motif D1. Residues 199–202 (NQID) form a G4 motif D1 region. A D2, does not associate with membranes region spans residues 561–1193 (MPKSEIKMEQ…WKNSDNTIKM (633 aa)). The interval 619 to 626 (GGFSSGKS) is G1 motif D2. A G2 motif D2 region spans residues 645-647 (TTA). The segment at 774 to 777 (DTPG) is G3 motif D2. The tract at residues 837-840 (NAAD) is G4 motif D2.

This sequence belongs to the TRAFAC class dynamin-like GTPase superfamily. Dynamin/Fzo/YdjA family. As to quaternary structure, homodimer in solution. Both D1 and D2 domains interact with YwpG, YneK interacts only with D1 while RNase Y (rny) only interacts with whole protein. Probably oligomerizes at damaged membrane sites. Requires Mg(2+) as cofactor.

It localises to the cell membrane. It catalyses the reaction GTP + H2O = GDP + phosphate + H(+). In terms of biological role, mediates lipid mixing of vesicles and full mixing of their contents in the absence and presence of GTP. Tethers and mixes small vesicles better than larger ones, indicating a curvature preference. GTP slows down DynA-mediated lipid fusion, perhaps controlling its activity. Prefers phospholipid composition close to the B.subtilis membrane; requires phosphatidylglycerol for fusion has no activity on pure phosphatidylethanolamine vesicles. Regulates membrane lipid diffusion. Required to prevent membrane damage when exposed to low levels of membrane-damaging antibiotics or to bacteriophage. Probably surveys the cell membrane for stress; localizes to sites of membrane damage (treatment with nisin) and forms foci in cells treated with pore-forming compounds (CCCP). May assist membrane repair, possibly by membrane tethering and fusion. Probably functions both in early and late cell division, affects the proper formation of the FtsZ ring. Plays a non-redundant role with flottilin (floT) in membrane dynamics and cell shape. Probably able to bend membranes. Tethers liposomes and mediates their fusion; this does not require GTPase activity or the presence of GTP. Both GTPase domains (dynamin-type G) are required for GTPase activity. Has intrinsic affinity for membranes and membrane distortion capability; causes tubulation and membrane distortion when expressed in a Drosophila cell line. The protein is Dynamin-like protein A of Bacillus subtilis (strain 168).